Consider the following 518-residue polypeptide: Probable cytochrome P450 317a1 (518 aa).

C461 contacts heme.

The protein belongs to the cytochrome P450 family. It depends on heme as a cofactor.

Its subcellular location is the endoplasmic reticulum membrane. The protein localises to the microsome membrane. In terms of biological role, may be involved in the metabolism of insect hormones and in the breakdown of synthetic insecticides. The protein is Probable cytochrome P450 317a1 (Cyp317a1) of Drosophila melanogaster (Fruit fly).